A 458-amino-acid polypeptide reads, in one-letter code: LysM domain-containing protein ARB_05157 (458 aa).

The first 19 residues, 1–19, serve as a signal peptide directing secretion; that stretch reads MVSLKVCFLLLASSELAFG. Residues 157–203 form the LysM 1 domain; that stretch reads AFHLVKQGEDCGTISATYGITSAQFLAWNPSAGKDCTGLWANAYACV. Residues 210–232 form a disordered region; the sequence is PPKTTSQAPQPTPTKPSNGIETP. Polar residues predominate over residues 212–229; it reads KTTSQAPQPTPTKPSNGI. 3 consecutive LysM domains span residues 245 to 291, 325 to 371, and 409 to 455; these read KFHL…YACV, KFYL…YSCV, and KFHF…YLCV.

Its subcellular location is the secreted. Might have a role in sequestration of chitin oligosaccharides (breakdown products of fungal cell walls that are released during invasion and act as triggers of host immunity) to dampen host defense. The protein is LysM domain-containing protein ARB_05157 of Arthroderma benhamiae (strain ATCC MYA-4681 / CBS 112371) (Trichophyton mentagrophytes).